Reading from the N-terminus, the 220-residue chain is GTP cyclohydrolase 1 (220 aa).

Cys109, His112, and Cys180 together coordinate Zn(2+).

Belongs to the GTP cyclohydrolase I family. In terms of assembly, toroid-shaped homodecamer, composed of two pentamers of five dimers.

It carries out the reaction GTP + H2O = 7,8-dihydroneopterin 3'-triphosphate + formate + H(+). Its pathway is cofactor biosynthesis; 7,8-dihydroneopterin triphosphate biosynthesis; 7,8-dihydroneopterin triphosphate from GTP: step 1/1. This Yersinia enterocolitica serotype O:8 / biotype 1B (strain NCTC 13174 / 8081) protein is GTP cyclohydrolase 1.